The sequence spans 140 residues: uncharacterized protein (140 aa).

The C2H2-type zinc finger occupies 21–42 (CPYCNYTNADVKAIKKHIKSKH).

To M.jannaschii MJECL27.

This is an uncharacterized protein from Methanocaldococcus jannaschii (strain ATCC 43067 / DSM 2661 / JAL-1 / JCM 10045 / NBRC 100440) (Methanococcus jannaschii).